The following is a 473-amino-acid chain: Inactive levansucrase (473 aa).

Positions 1–29 (MNIKKFAKQATVLTFTTALLAGGATQAFA) are cleaved as a signal peptide.

This sequence belongs to the glycosyl hydrolase 68 family.

The protein resides in the secreted. This is Inactive levansucrase (sacB) from Geobacillus stearothermophilus (Bacillus stearothermophilus).